A 268-amino-acid polypeptide reads, in one-letter code: Interleukin-1 alpha (268 aa).

The propeptide occupies 1 to 112 (MAKVPDLFED…DTEEEIIKPR (112 aa)). Position 82 is an N6-acetyllysine (lysine 82). Residues 82 to 86 (KKRRL) form a nuclear localization signal (NLS) region. Phosphoserine is present on serine 87. Asparagine 102 and asparagine 141 each carry an N-linked (GlcNAc...) asparagine glycan.

It belongs to the IL-1 family. In terms of assembly, monomer. Interacts with TMED10; the interaction mediates the translocation from the cytoplasm into the ERGIC (endoplasmic reticulum-Golgi intermediate compartment) and thereby secretion. Interacts with IL1R1. Interacts with S100A13; this interaction is the first step in the export of IL1A, followed by direct translocation of this complex across the plasma membrane. Acetylated within its nuclear localization sequence, which impacts subcellular localization. Post-translationally, proteolytic processed by CAPN1 in a calcium-dependent manner. Cleavage from 31 kDa precursor to 18 kDa biologically active molecules. In terms of processing, phosphorylated. Phosphorylation greatly enhances susceptibility to digestion and promotes the conversion of pre-IL1A alpha to the biologically active IL1A.

Its subcellular location is the nucleus. It is found in the cytoplasm. The protein resides in the secreted. Functionally, cytokine constitutively present intracellularly in nearly all resting non-hematopoietic cells that plays an important role in inflammation and bridges the innate and adaptive immune systems. After binding to its receptor IL1R1 together with its accessory protein IL1RAP, forms the high affinity interleukin-1 receptor complex. Signaling involves the recruitment of adapter molecules such as MYD88, IRAK1 or IRAK4. In turn, mediates the activation of NF-kappa-B and the three MAPK pathways p38, p42/p44 and JNK pathways. Within the cell, acts as an alarmin and cell death results in its liberation in the extracellular space after disruption of the cell membrane to induce inflammation and alert the host to injury or damage. In addition to its role as a danger signal, which occurs when the cytokine is passively released by cell necrosis, directly senses DNA damage and acts as signal for genotoxic stress without loss of cell integrity. This Lama glama (Llama) protein is Interleukin-1 alpha (IL1A).